The chain runs to 207 residues: BON1-associated protein 2 (207 aa).

A C2 domain is found at 1–112 (MSYSTFKRSL…GFAPQGHLNF (112 aa)).

In terms of assembly, interacts with BON1, BON2 and BON3. In terms of tissue distribution, expressed in roots, leaves, stems and flowers.

The protein resides in the membrane. Negative regulator of cell death and defense responses. Exhibits calcium-dependent phospholipid binding properties. The polypeptide is BON1-associated protein 2 (BAP2) (Arabidopsis thaliana (Mouse-ear cress)).